Consider the following 318-residue polypeptide: Malate dehydrogenase (318 aa).

Residues 10-15 (GGGQIG) and Asp34 contribute to the NAD(+) site. 2 residues coordinate substrate: Arg83 and Arg89. NAD(+) contacts are provided by residues Asn96 and 119 to 121 (ISN). Positions 121 and 152 each coordinate substrate. His176 (proton acceptor) is an active-site residue.

This sequence belongs to the LDH/MDH superfamily. MDH type 3 family.

The enzyme catalyses (S)-malate + NAD(+) = oxaloacetate + NADH + H(+). In terms of biological role, catalyzes the reversible oxidation of malate to oxaloacetate. The protein is Malate dehydrogenase of Geotalea uraniireducens (strain Rf4) (Geobacter uraniireducens).